We begin with the raw amino-acid sequence, 239 residues long: Probable transcriptional regulator ycf27 (239 aa).

The Response regulatory domain occupies 7–120 (KILVVDDEIS…ELEARIRSLL (114 aa)). 4-aspartylphosphate is present on aspartate 56. A DNA-binding region (H-T-H motif) is located at residues 76 to 94 (DIPIIMLTALGDVADRITG). The segment at residues 135-236 (GENLQIGFLK…ARGIGYLFQN (102 aa)) is a DNA-binding region (ompR/PhoB-type).

The protein resides in the plastid. The protein localises to the cyanelle. Probable promoter-specific protein mediating the interaction between DNA and RNA polymerase. This Cyanophora paradoxa protein is Probable transcriptional regulator ycf27 (ycf27).